The sequence spans 1502 residues: Ras guanine nucleotide exchange factor P (1502 aa).

A Calponin-homology (CH) domain is found at 84–187; it reads FIIDNQVLDW…LLYSLMKFSE (104 aa). 4 disordered regions span residues 216–242, 325–436, 456–534, and 589–935; these read AQSS…SSNE, QQQQ…PNNN, EDNT…VGRG, and TTTA…NQNN. 4 stretches are compositionally biased toward low complexity: residues 218 to 242, 325 to 345, 371 to 400, and 407 to 421; these read SSSS…SSNE, QQQQ…TTTT, TTSS…LLNH, and SSST…PIST. Residues 287–328 adopt a coiled-coil conformation; it reads QQQQQQQQQQQQQQQQQQQQQQQQQQQQQQQQQQQQQQQQQQ. Positions 422–436 are enriched in polar residues; the sequence is PSTSKSNSFQKPNNN. Positions 451–515 form a coiled coil; the sequence is EENEIEDNTN…NQNENEDEVK (65 aa). Residues 458–508 are compositionally biased toward low complexity; it reads NTNNNNNNNNNNNNNNNNNNNNNNNNNNNNNNNNTNDNINNNNKNNNNNQN. Positions 518–528 are enriched in pro residues; sequence HSPPKVRPPLP. Low complexity-rich tracts occupy residues 589–646, 663–675, 686–719, 764–790, and 813–853; these read TTTA…NNNN, TIST…TGTI, SQPL…LSLP, NSIN…VSQS, and NSNS…NNNN. The span at 861–876 shows a compositional bias: polar residues; the sequence is LTMSNQSANSLKSSGN. Over residues 883–935 the composition is skewed to low complexity; it reads TNGNNNISQNQNQNQNQNQNQTQNQNQNQNQNHISHSNSISSGNLNNHVNQNN. Residues 1032 to 1076 adopt a coiled-coil conformation; that stretch reads VEENKNLITRTEEMQKMIDSLMKEKKELINEKNTLASMLAKTKQQ. An N-terminal Ras-GEF domain is found at 1102 to 1249; it reads GKYEIKGGTT…SELKLVFSTP (148 aa). A Ras-GEF domain is found at 1267 to 1498; that stretch reads DPAEIARQLT…FNLSLICEPR (232 aa).

Its function is as follows. Promotes the exchange of Ras-bound GDP by GTP. This chain is Ras guanine nucleotide exchange factor P (gefP), found in Dictyostelium discoideum (Social amoeba).